The chain runs to 72 residues: Translation initiation factor IF-1 (72 aa).

One can recognise an S1-like domain in the interval 1–72; that stretch reads MAKDDVIEVD…DKGRITFRYK (72 aa).

Belongs to the IF-1 family. Component of the 30S ribosomal translation pre-initiation complex which assembles on the 30S ribosome in the order IF-2 and IF-3, IF-1 and N-formylmethionyl-tRNA(fMet); mRNA recruitment can occur at any time during PIC assembly.

It localises to the cytoplasm. Its function is as follows. One of the essential components for the initiation of protein synthesis. Stabilizes the binding of IF-2 and IF-3 on the 30S subunit to which N-formylmethionyl-tRNA(fMet) subsequently binds. Helps modulate mRNA selection, yielding the 30S pre-initiation complex (PIC). Upon addition of the 50S ribosomal subunit IF-1, IF-2 and IF-3 are released leaving the mature 70S translation initiation complex. The polypeptide is Translation initiation factor IF-1 (Wolinella succinogenes (strain ATCC 29543 / DSM 1740 / CCUG 13145 / JCM 31913 / LMG 7466 / NCTC 11488 / FDC 602W) (Vibrio succinogenes)).